The sequence spans 131 residues: Large ribosomal subunit protein bL21 (131 aa).

Residues 111 to 131 (VAAATGTADARRAAHNASAKE) form a disordered region.

The protein belongs to the bacterial ribosomal protein bL21 family. In terms of assembly, part of the 50S ribosomal subunit. Contacts protein L20.

Its function is as follows. This protein binds to 23S rRNA in the presence of protein L20. This Cereibacter sphaeroides (strain ATCC 17029 / ATH 2.4.9) (Rhodobacter sphaeroides) protein is Large ribosomal subunit protein bL21.